Consider the following 498-residue polypeptide: ATP synthase subunit beta, chloroplastic (498 aa).

172–179 (GGAGVGKT) is an ATP binding site.

It belongs to the ATPase alpha/beta chains family. In terms of assembly, F-type ATPases have 2 components, CF(1) - the catalytic core - and CF(0) - the membrane proton channel. CF(1) has five subunits: alpha(3), beta(3), gamma(1), delta(1), epsilon(1). CF(0) has four main subunits: a(1), b(1), b'(1) and c(9-12).

The protein localises to the plastid. Its subcellular location is the chloroplast thylakoid membrane. The catalysed reaction is ATP + H2O + 4 H(+)(in) = ADP + phosphate + 5 H(+)(out). Its function is as follows. Produces ATP from ADP in the presence of a proton gradient across the membrane. The catalytic sites are hosted primarily by the beta subunits. In Carica papaya (Papaya), this protein is ATP synthase subunit beta, chloroplastic.